We begin with the raw amino-acid sequence, 246 residues long: Probable transcriptional regulatory protein APP7_1210 (246 aa).

It belongs to the TACO1 family.

The protein localises to the cytoplasm. This chain is Probable transcriptional regulatory protein APP7_1210, found in Actinobacillus pleuropneumoniae serotype 7 (strain AP76).